The chain runs to 965 residues: Kinesin-like protein KIN-7K, chloroplastic (965 aa).

Positions 1-69 (MASRQGSKSR…PQTAQRSKEN (69 aa)) are disordered. The segment covering 19–28 (STASSTTSSS) has biased composition (low complexity). The span at 29-38 (KLYQETSIDG) shows a compositional bias: polar residues. The segment covering 40–56 (SSPASSSAQSKQQFFSP) has biased composition (low complexity). The Kinesin motor domain maps to 69–388 (NVTVTVRFRP…LKFAHRAKHI (320 aa)). 149–156 (GVTSSGKT) serves as a coordination point for ATP. A coiled-coil region spans residues 389–483 (EIQAEQNKII…LTKLILVSTK (95 aa)). Over residues 551-561 (LLNWLKPKKRD) the composition is skewed to basic residues. 2 disordered regions span residues 551 to 633 (LLNW…KMSD) and 842 to 888 (ATQK…ELRM). Residues 564–577 (SSASDQSSVVKSNS) show a composition bias toward low complexity. Positions 606–623 (SEPREDREALEDSSHEME) are enriched in basic and acidic residues. Coiled-coil stretches lie at residues 628–703 (SNKM…FVMT) and 738–846 (NRII…TQKS). Low complexity predominate over residues 851–862 (RNKTGTTTNVRN). Over residues 864 to 888 (GRRESLAKRQEHDSPSMELKRELRM) the composition is skewed to basic and acidic residues. Residues 896-931 (YEAALGEKEQREAELERILEETKQREAYLENELANM) are a coiled coil. The interval 942-965 (QGADSEISDSISETRQTEQTEGSF) is disordered. Residues 949–965 (SDSISETRQTEQTEGSF) show a composition bias toward polar residues.

This sequence belongs to the TRAFAC class myosin-kinesin ATPase superfamily. Kinesin family. KIN-7 subfamily.

Its subcellular location is the plastid. The protein localises to the chloroplast. This Arabidopsis thaliana (Mouse-ear cress) protein is Kinesin-like protein KIN-7K, chloroplastic.